Here is a 114-residue protein sequence, read N- to C-terminus: UPF0102 protein HPAG1_0809 (114 aa).

This sequence belongs to the UPF0102 family.

In Helicobacter pylori (strain HPAG1), this protein is UPF0102 protein HPAG1_0809.